The chain runs to 353 residues: 4-hydroxy-2-oxovalerate aldolase 1 (353 aa).

A Pyruvate carboxyltransferase domain is found at 14–266 (VRMTDTSLRD…KTGIDFFDIA (253 aa)). 22 to 23 (RD) lines the substrate pocket. Aspartate 23 provides a ligand contact to Mn(2+). The Proton acceptor role is filled by histidine 26. Substrate contacts are provided by serine 176 and histidine 205. Residues histidine 205 and histidine 207 each coordinate Mn(2+). Tyrosine 296 contacts substrate.

This sequence belongs to the 4-hydroxy-2-oxovalerate aldolase family.

It carries out the reaction (S)-4-hydroxy-2-oxopentanoate = acetaldehyde + pyruvate. This Mycobacterium sp. (strain KMS) protein is 4-hydroxy-2-oxovalerate aldolase 1.